The chain runs to 284 residues: Small ribosomal subunit protein uS2 (284 aa).

The protein belongs to the universal ribosomal protein uS2 family.

The chain is Small ribosomal subunit protein uS2 (rpsB) from Mycoplasma genitalium (strain ATCC 33530 / DSM 19775 / NCTC 10195 / G37) (Mycoplasmoides genitalium).